The following is a 445-amino-acid chain: Mitochondrial-processing peptidase subunit alpha-2 (445 aa).

A mitochondrion-targeting transit peptide spans 1 to 13 (MIGRFIARNYTTS).

This sequence belongs to the peptidase M16 family. As to quaternary structure, heterodimer of alpha and beta subunits, forming the mitochondrial processing protease (MPP) in which subunit alpha is involved in substrate recognition and binding and subunit beta is the catalytic subunit.

It is found in the mitochondrion matrix. Substrate recognition and binding subunit of the essential mitochondrial processing protease (MPP), which cleaves the mitochondrial sequence off newly imported precursors proteins. The chain is Mitochondrial-processing peptidase subunit alpha-2 (mppA2) from Dictyostelium discoideum (Social amoeba).